A 64-amino-acid chain; its full sequence is Alternative prion protein (64 aa).

Residues Met-1–Ser-22 are disordered. Over residues Thr-11–Ser-22 the composition is skewed to polar residues. Residues Trp-40–Trp-58 form a helical membrane-spanning segment.

It is found in the mitochondrion outer membrane. This chain is Alternative prion protein, found in Ovis aries (Sheep).